We begin with the raw amino-acid sequence, 133 residues long: Phosphoribosyl-ATP pyrophosphatase (133 aa).

Residues 1–22 (MGKPATKPAPKPSKQQDDKKSD) are disordered.

The protein belongs to the PRA-PH family.

It localises to the cytoplasm. The enzyme catalyses 1-(5-phospho-beta-D-ribosyl)-ATP + H2O = 1-(5-phospho-beta-D-ribosyl)-5'-AMP + diphosphate + H(+). Its pathway is amino-acid biosynthesis; L-histidine biosynthesis; L-histidine from 5-phospho-alpha-D-ribose 1-diphosphate: step 2/9. The protein is Phosphoribosyl-ATP pyrophosphatase of Gluconobacter oxydans (strain 621H) (Gluconobacter suboxydans).